The chain runs to 395 residues: Beta-1,4-galactosyltransferase 3 (395 aa).

The Cytoplasmic segment spans residues methionine 1–cysteine 10. A helical; Signal-anchor for type II membrane protein membrane pass occupies residues threonine 11–phenylalanine 31. Topologically, residues arginine 32–histidine 395 are lumenal. The N-linked (GlcNAc...) asparagine glycan is linked to asparagine 57. Cysteines 79 and 121 form a disulfide. UDP-alpha-D-galactose is bound by residues proline 132–arginine 136, phenylalanine 171–arginine 173, valine 198–aspartate 199, tyrosine 228, and tryptophan 260. A disulfide bond links cysteine 192 and cysteine 211. Aspartate 199 contacts Mn(2+). N-acetyl-D-glucosamine is bound at residue glycine 262–aspartate 265. Histidine 293 lines the Mn(2+) pocket. Histidine 293 to glycine 295 is a UDP-alpha-D-galactose binding site. Arginine 305 serves as a coordination point for N-acetyl-D-glucosamine. Asparagine 339 and asparagine 387 each carry an N-linked (GlcNAc...) asparagine glycan. Residues threonine 341–histidine 395 form a disordered region.

This sequence belongs to the glycosyltransferase 7 family. It depends on Mn(2+) as a cofactor.

Its subcellular location is the golgi apparatus. The protein resides in the golgi stack membrane. The enzyme catalyses an N-acetyl-beta-D-glucosaminyl derivative + UDP-alpha-D-galactose = a beta-D-galactosyl-(1-&gt;4)-N-acetyl-beta-D-glucosaminyl derivative + UDP + H(+). It catalyses the reaction N-acetyl-D-glucosamine + UDP-alpha-D-galactose = beta-D-galactosyl-(1-&gt;4)-N-acetyl-D-glucosamine + UDP + H(+). The catalysed reaction is a beta-D-GlcNAc-(1-&gt;3)-beta-D-Gal-(1-&gt;4)-beta-D-Glc-(1&lt;-&gt;1)-Cer(d18:1(4E)) + UDP-alpha-D-galactose = a neolactoside nLc4Cer(d18:1(4E)) + UDP + H(+). It carries out the reaction a beta-D-glucosylceramide + UDP-alpha-D-galactose = a beta-D-galactosyl-(1-&gt;4)-beta-D-glucosyl-(1&lt;-&gt;1)-ceramide + UDP + H(+). The enzyme catalyses a neolactoside IV(3)-beta-GlcNAc-nLc4Cer + UDP-alpha-D-galactose = a neolactoside nLc6Cer + UDP + H(+). It functions in the pathway protein modification; protein glycosylation. In terms of biological role, responsible for the synthesis of complex-type N-linked oligosaccharides in many glycoproteins as well as the carbohydrate moieties of glycolipids. The polypeptide is Beta-1,4-galactosyltransferase 3 (B4GALT3) (Cricetulus griseus (Chinese hamster)).